Reading from the N-terminus, the 410-residue chain is Probable nicotinate phosphoribosyltransferase (410 aa).

Residues Tyr15, Phe170, and Thr220 each coordinate nicotinate. The residue at position 223 (His223) is a Phosphohistidine. Residue Thr348 coordinates 5-phospho-alpha-D-ribose 1-diphosphate.

Belongs to the NAPRTase family. Mg(2+) serves as cofactor. Requires Mn(2+) as cofactor. In terms of processing, transiently phosphorylated on a His residue during the reaction cycle. Phosphorylation strongly increases the affinity for substrates and increases the rate of nicotinate D-ribonucleotide production. Dephosphorylation regenerates the low-affinity form of the enzyme, leading to product release.

The catalysed reaction is nicotinate + 5-phospho-alpha-D-ribose 1-diphosphate + ATP + H2O = nicotinate beta-D-ribonucleotide + ADP + phosphate + diphosphate. Its pathway is cofactor biosynthesis; NAD(+) biosynthesis; nicotinate D-ribonucleotide from nicotinate: step 1/1. Catalyzes the first step in the biosynthesis of NAD from nicotinic acid, the ATP-dependent synthesis of beta-nicotinate D-ribonucleotide from nicotinate and 5-phospho-D-ribose 1-phosphate. Helps prevent cellular oxidative stress via its role in NAD biosynthesis. The chain is Probable nicotinate phosphoribosyltransferase from Schizosaccharomyces pombe (strain 972 / ATCC 24843) (Fission yeast).